A 669-amino-acid chain; its full sequence is Phosphatidylinositol-3-phosphate phosphatase MTMR1 (669 aa).

Position 1 is an N-acetylmethionine (Met1). A compositionally biased stretch (low complexity) spans 1-17; sequence MDRPVAAAAAASAASCE. Residues 1-55 form a disordered region; sequence MDRPVAAAAAASAASCEGAGGPGPGPGASWRPSRVAGGASASSRHPSIETLDSPT. Phosphoserine occurs at positions 47 and 53. Residues 94 to 165 form the GRAM domain; that stretch reads NKLAQMEEAP…GVISRVEKIG (72 aa). The 376-residue stretch at 230-605 folds into the Myotubularin phosphatase domain; the sequence is GWKVYDPVSE…SHLELWVNYY (376 aa). 3 residues coordinate a 1,2-diacyl-sn-glycero-3-phospho-(1D-myo-inositol-3-phosphate): Asn355, Asn380, and Ile381. Catalysis depends on Cys442, which acts as the Phosphocysteine intermediate. The a 1,2-diacyl-sn-glycero-3-phospho-(1D-myo-inositol-3-phosphate) site is built by Ser443, Asp444, Gly445, Trp446, Asp447, Arg448, and Arg488. Ser443 provides a ligand contact to phosphate. Residues Gly445, Trp446, Asp447, and Arg448 each contribute to the phosphate site. Positions 612–669 are required for dimerization; that stretch reads MRPQMPIHQNLKELLAIKAELQKRVEDLQREMATRTISSSSERGSSPTHSATPVHTSV. The interval 644–669 is disordered; sequence ATRTISSSSERGSSPTHSATPVHTSV. The span at 649–661 shows a compositional bias: low complexity; the sequence is SSSSERGSSPTHS.

Belongs to the protein-tyrosine phosphatase family. Non-receptor class myotubularin subfamily. Homodimer. As to expression, widely expressed. Detected in skeletal muscle, heart, lung, liver and brain.

It localises to the cell membrane. The protein localises to the cytoplasm. The catalysed reaction is a 1,2-diacyl-sn-glycero-3-phospho-(1D-myo-inositol-3-phosphate) + H2O = a 1,2-diacyl-sn-glycero-3-phospho-(1D-myo-inositol) + phosphate. The enzyme catalyses 1,2-dioctanoyl-sn-glycero-3-phospho-(1-D-myo-inositol-3-phosphate) + H2O = 1,2-dioctanoyl-sn-glycero-3-phospho-(1D-myo-inositol) + phosphate. It catalyses the reaction a 1,2-diacyl-sn-glycero-3-phospho-(1D-myo-inositol-3,5-bisphosphate) + H2O = a 1,2-diacyl-sn-glycero-3-phospho-(1D-myo-inositol-5-phosphate) + phosphate. Functionally, lipid phosphatase that specifically dephosphorylates the D-3 position of phosphatidylinositol 3-phosphate, generating phosphatidylinositol. Could also dephosphorylate phosphatidylinositol 3,5-bisphosphate to produce phosphatidylinositol 5-phosphate. The polypeptide is Phosphatidylinositol-3-phosphate phosphatase MTMR1 (Mus musculus (Mouse)).